Here is a 1292-residue protein sequence, read N- to C-terminus: ABC multidrug transporter MDR5 (1292 aa).

Residues methionine 1–valine 43 are disordered. 2 helical membrane passes run isoleucine 79 to phenylalanine 99 and leucine 128 to phenylalanine 148. Positions glycine 81 to lysine 370 constitute an ABC transmembrane type-1 1 domain. Asparagine 149 carries N-linked (GlcNAc...) asparagine glycosylation. Helical transmembrane passes span valine 202 to glutamine 222, leucine 226 to alanine 246, glutamate 314 to leucine 334, and isoleucine 344 to threonine 364. The region spanning leucine 405 to alanine 650 is the ABC transporter 1 domain. Glycine 440–serine 447 provides a ligand contact to ATP. The N-linked (GlcNAc...) asparagine glycan is linked to asparagine 494. Residues alanine 656–histidine 691 are disordered. Residues aspartate 663 to alanine 680 are compositionally biased toward basic and acidic residues. A run of 2 helical transmembrane segments spans residues histidine 720–alanine 740 and leucine 768–leucine 788. In terms of domain architecture, ABC transmembrane type-1 2 spans leucine 725–lysine 1012. A glycan (N-linked (GlcNAc...) asparagine) is linked at asparagine 820. 4 helical membrane-spanning segments follow: residues isoleucine 844–threonine 864, tryptophan 866–isoleucine 886, isoleucine 949–phenylalanine 969, and phenylalanine 986–phenylalanine 1006. 3 N-linked (GlcNAc...) asparagine glycosylation sites follow: asparagine 1009, asparagine 1031, and asparagine 1052. An ABC transporter 2 domain is found at valine 1048–alanine 1285. Glycine 1083–threonine 1090 lines the ATP pocket.

The protein belongs to the ABC transporter superfamily. ABCB family. Multidrug resistance exporter (TC 3.A.1.201) subfamily.

It localises to the cell membrane. The catalysed reaction is itraconazole(in) + ATP + H2O = itraconazole(out) + ADP + phosphate + H(+). Functionally, pleiotropic ABC efflux transporter involved in the modulation susceptibility to itraconazole. The sequence is that of ABC multidrug transporter MDR5 from Trichophyton rubrum (strain ATCC MYA-4607 / CBS 118892) (Athlete's foot fungus).